The chain runs to 471 residues: Trigger factor (471 aa).

The 96-residue stretch at 169 to 264 (GDVAVVDFKG…LKEIKEKELP (96 aa)) folds into the PPIase FKBP-type domain.

The protein belongs to the FKBP-type PPIase family. Tig subfamily.

The protein resides in the cytoplasm. It catalyses the reaction [protein]-peptidylproline (omega=180) = [protein]-peptidylproline (omega=0). Its function is as follows. Involved in protein export. Acts as a chaperone by maintaining the newly synthesized protein in an open conformation. Functions as a peptidyl-prolyl cis-trans isomerase. In Nostoc sp. (strain PCC 7120 / SAG 25.82 / UTEX 2576), this protein is Trigger factor.